The sequence spans 353 residues: MKKTIVALAVAAVAATSANAATVYNQDGTKVDVNGSLRLILKKEKNERGDLVDNGSRVSFKASHDLGEGLSALAYTELRFSKNVPVQVKDQQGEVVREYEVEKLGNNVHVKRLYAGFAYEGLGTLTFGNQLTIGDDVGLSDYTYFNSGINNLLSSGEKAINFKSAEFNGFTFGGAYVFSADADKQALRDGRGFVVAGLYNRKMGDVGFAFEAGYSQKYVKQEVEQNPPAAQKVFKDEKEKAFMVGAELSYAGLALGVDYAQSKVTNVDGKKRALEVGLNYDLNDRAKVYTDFIWEKEGPKGDVTRNRTVAVGFGYKLHKQVETFVEAAWGREKDSDGVTTKNNVVGTGLRVHF.

A signal peptide spans 1–20; sequence MKKTIVALAVAAVAATSANA.

Disulfide bond interactions within and between MOMP molecules and other components form high molecular-weight oligomers.

It is found in the cell outer membrane. Functionally, structural rigidity of the outer membrane of elementary bodies and porin forming, permitting diffusion of solutes through the intracellular reticulate body membrane. This is Major outer membrane protein (ompH) from Pasteurella multocida.